A 502-amino-acid chain; its full sequence is Glycerol kinase (502 aa).

Thr13 is a binding site for ADP. ATP contacts are provided by Thr13, Thr14, and Ser15. Thr13 is a binding site for sn-glycerol 3-phosphate. An ADP-binding site is contributed by Arg17. Sn-glycerol 3-phosphate-binding residues include Arg83, Glu84, Tyr136, and Asp246. 5 residues coordinate glycerol: Arg83, Glu84, Tyr136, Asp246, and Gln247. The ADP site is built by Thr268 and Gly311. ATP is bound by residues Thr268, Gly311, Gln315, and Gly412. Positions 412 and 416 each coordinate ADP.

Belongs to the FGGY kinase family.

It catalyses the reaction glycerol + ATP = sn-glycerol 3-phosphate + ADP + H(+). Its pathway is polyol metabolism; glycerol degradation via glycerol kinase pathway; sn-glycerol 3-phosphate from glycerol: step 1/1. Inhibited by fructose 1,6-bisphosphate (FBP). Its function is as follows. Key enzyme in the regulation of glycerol uptake and metabolism. Catalyzes the phosphorylation of glycerol to yield sn-glycerol 3-phosphate. The protein is Glycerol kinase of Francisella tularensis subsp. holarctica (strain FTNF002-00 / FTA).